The following is a 221-amino-acid chain: Queuosine precursor transporter (221 aa).

Topologically, residues 1-12 are cytoplasmic; sequence MNVFSQTQRYKA. The chain crosses the membrane as a helical span at residues 13 to 33; the sequence is LFWLSLFHLLVITSSNYLVQL. Residue P34 is a topological domain, periplasmic. The helical transmembrane segment at 35-55 threads the bilayer; it reads VSILGFHTTWGAFSFPFIFLA. Topologically, residues 56 to 70 are cytoplasmic; the sequence is TDLTVRIFGAPLARR. A helical transmembrane segment spans residues 71–91; it reads IIFAVMIPALLISYVISSLFY. Residues 92-97 are Periplasmic-facing; it reads MGSWQG. The helical transmembrane segment at 98–118 threads the bilayer; the sequence is FGALAHFNLFVARIATASFMA. Residues 119–143 are Cytoplasmic-facing; it reads YALGQILDVHVFNRLRQSRRWWLAP. Residues 144–164 form a helical membrane-spanning segment; it reads TASTLFGNVSDTLAFFFIAFW. Topologically, residues 165–184 are periplasmic; sequence RSPDAFMAEHWMEIALVDYC. A helical membrane pass occupies residues 185 to 205; the sequence is FKVLISIVFFLPMYGVLLNML. The Cytoplasmic segment spans residues 206–221; sequence LKRLADKSEINALQAS.

It belongs to the vitamin uptake transporter (VUT/ECF) (TC 2.A.88) family. Q precursor transporter subfamily.

It is found in the cell inner membrane. Involved in the import of queuosine (Q) precursors, required for Q precursor salvage. Transports 7-cyano-7-deazaguanine (preQ(0)) and 7-aminomethyl-7-deazaguanine (preQ(1)), with a preference for preQ(0). The sequence is that of Queuosine precursor transporter (yhhQ) from Escherichia coli (strain K12).